Consider the following 81-residue polypeptide: Antitoxin VapB20 (81 aa).

Functionally, antitoxin component of a type II toxin-antitoxin (TA) system. Neutralizes the toxic effect of cognate toxin VapC20. The protein is Antitoxin VapB20 (vapB20) of Mycobacterium tuberculosis (strain CDC 1551 / Oshkosh).